The chain runs to 102 residues: ATP-dependent Clp protease adapter protein ClpS (102 aa).

This sequence belongs to the ClpS family. Binds to the N-terminal domain of the chaperone ClpA.

Its function is as follows. Involved in the modulation of the specificity of the ClpAP-mediated ATP-dependent protein degradation. The polypeptide is ATP-dependent Clp protease adapter protein ClpS (Shewanella frigidimarina (strain NCIMB 400)).